The sequence spans 269 residues: tRNA pseudouridine synthase A (269 aa).

Asp55 (nucleophile) is an active-site residue. Tyr111 contacts substrate.

The protein belongs to the tRNA pseudouridine synthase TruA family.

It catalyses the reaction uridine(38/39/40) in tRNA = pseudouridine(38/39/40) in tRNA. Functionally, formation of pseudouridine at positions 38, 39 and 40 in the anticodon stem and loop of transfer RNAs. The chain is tRNA pseudouridine synthase A from Methanosarcina acetivorans (strain ATCC 35395 / DSM 2834 / JCM 12185 / C2A).